A 268-amino-acid polypeptide reads, in one-letter code: NH(3)-dependent NAD(+) synthetase (268 aa).

45 to 52 is a binding site for ATP; the sequence is GLSGGIDS. Aspartate 51 is a binding site for Mg(2+). Arginine 129 serves as a coordination point for deamido-NAD(+). Threonine 149 provides a ligand contact to ATP. Glutamate 154 is a Mg(2+) binding site. Lysine 162 and aspartate 169 together coordinate deamido-NAD(+). Positions 178 and 200 each coordinate ATP. 260-261 contacts deamido-NAD(+); it reads HK.

It belongs to the NAD synthetase family. As to quaternary structure, homodimer.

It carries out the reaction deamido-NAD(+) + NH4(+) + ATP = AMP + diphosphate + NAD(+) + H(+). Its pathway is cofactor biosynthesis; NAD(+) biosynthesis; NAD(+) from deamido-NAD(+) (ammonia route): step 1/1. Functionally, catalyzes the ATP-dependent amidation of deamido-NAD to form NAD. Uses ammonia as a nitrogen source. This is NH(3)-dependent NAD(+) synthetase from Halobacterium salinarum (strain ATCC 29341 / DSM 671 / R1).